Reading from the N-terminus, the 92-residue chain is Protein RESPONSE TO LOW SULFUR 4 (92 aa).

Positions 8–63 (VMVAASEVEELRQKNGEMEKAVEEMRKEMLQLWRRTQVAEEAEEHLCSQLAELEAE) form a coiled coil.

Its function is as follows. Required for flower development in short-day conditions. The protein is Protein RESPONSE TO LOW SULFUR 4 of Arabidopsis thaliana (Mouse-ear cress).